The chain runs to 195 residues: Probable GTP-binding protein EngB (195 aa).

The EngB-type G domain occupies 22–195 (QLPEIALAGR…WSALSRYIKR (174 aa)). GTP-binding positions include 30–37 (GRSNVGKS), 57–61 (GKTQT), 75–78 (DVPG), 142–145 (TKLD), and 174–176 (FSA). Mg(2+)-binding residues include serine 37 and threonine 59.

Belongs to the TRAFAC class TrmE-Era-EngA-EngB-Septin-like GTPase superfamily. EngB GTPase family. It depends on Mg(2+) as a cofactor.

Functionally, necessary for normal cell division and for the maintenance of normal septation. The chain is Probable GTP-binding protein EngB from Oceanobacillus iheyensis (strain DSM 14371 / CIP 107618 / JCM 11309 / KCTC 3954 / HTE831).